A 620-amino-acid polypeptide reads, in one-letter code: Protein CNGC15b (620 aa).

The next 6 helical transmembrane spans lie at 73-93, 102-122, 161-181, 198-218, 237-257, and 356-376; these read IFLV…YLPI, IGIA…VFYV, GFFL…WIVI, FIII…SSQI, LMLY…LSIE, and GEIM…ALLI. 462-559 serves as a coordination point for a nucleoside 3',5'-cyclic phosphate; the sequence is LFDAMDERML…SSTRTVKAIS (98 aa).

This sequence belongs to the cyclic nucleotide-gated cation channel (TC 1.A.1.5) family. As to quaternary structure, interacts (via N-terminus) with DMI1 (via c-terminus). The Nod factor has no effect on this interaction, implying that the complex is maintained after activation. Expressed in roots, stems, leaves, flowers and pods.

The protein localises to the nucleus membrane. Functionally, cyclic nucleotide-gated channel involved in the establishment of both rhizobial and mycorrhizal associations. Required for full activation of nuclear-localized Ca(2+) oscillations by Nod and Myc factors. Simultaneous activation of the K(+)-permeable channel DMI1 and the Ca(2+) channel CNGC15 can give rise to sustained Ca(2+) oscillations. May function during fertilization in both female and male gametophytic Ca(2+) signaling. The chain is Protein CNGC15b from Medicago truncatula (Barrel medic).